A 102-amino-acid chain; its full sequence is MVDLKITLVNEDGESTISGKGHPLPAPLIFPPIYIFRFTQYQTEGKLWDKNEFQIKSGKIEFDGEEYDIPESKGTWSKDDEENAIDVNLHLFRPPEKFFPKN.

It belongs to the csb family. O-glycosylated.

The protein localises to the cell surface. Cell-cell adhesion during early development. This is Glycoprotein 24A (csbA) from Dictyostelium discoideum (Social amoeba).